A 328-amino-acid polypeptide reads, in one-letter code: Serine protease 27 (328 aa).

A signal peptide spans methionine 1–glycine 22. Residues alanine 23–arginine 37 constitute a propeptide, activation peptide. A Peptidase S1 domain is found at methionine 38–proline 280. A disulfide bond links cysteine 63 and cysteine 79. Histidine 78 serves as the catalytic Charge relay system. N-linked (GlcNAc...) asparagine glycosylation is present at asparagine 82. The Charge relay system role is filled by aspartate 127. Disulfide bonds link cysteine 161/cysteine 238, cysteine 194/cysteine 217, and cysteine 228/cysteine 256. The active-site Charge relay system is the serine 232.

Belongs to the peptidase S1 family.

It is found in the secreted. The sequence is that of Serine protease 27 (Prss27) from Rattus norvegicus (Rat).